The sequence spans 303 residues: Recombination-associated protein RdgC (303 aa).

This sequence belongs to the RdgC family.

Its subcellular location is the cytoplasm. The protein localises to the nucleoid. Functionally, may be involved in recombination. The chain is Recombination-associated protein RdgC from Salmonella newport (strain SL254).